Here is a 642-residue protein sequence, read N- to C-terminus: Uromodulin (642 aa).

The signal sequence occupies residues 1–26; the sequence is MGQLSSLTSVWMVVVVTSWVIIAANI. Residues 32 to 64 enclose the EGF-like 1 domain; sequence RSCSECHSNATCMEDGMVTTCSCLVGFTGSGFE. Cystine bridges form between cysteine 34/cysteine 43, cysteine 37/cysteine 52, cysteine 54/cysteine 65, cysteine 71/cysteine 85, cysteine 79/cysteine 94, cysteine 96/cysteine 108, cysteine 114/cysteine 128, cysteine 122/cysteine 137, cysteine 139/cysteine 150, cysteine 152/cysteine 163, cysteine 157/cysteine 172, cysteine 176/cysteine 269, cysteine 197/cysteine 284, cysteine 219/cysteine 257, cysteine 225/cysteine 289, cysteine 250/cysteine 258, cysteine 299/cysteine 308, cysteine 302/cysteine 317, cysteine 319/cysteine 348, cysteine 336/cysteine 426, and cysteine 367/cysteine 390. N-linked (GlcNAc...) asparagine glycosylation is present at asparagine 40. One can recognise an EGF-like 2; calcium-binding domain in the interval 67–109; sequence DLDECAIPGAHNCSEGSSCMNTLGSYLCTCPDGFRLTPGLGCI. Asparagine 78 is a glycosylation site (N-linked (GlcNAc...) asparagine). The EGF-like 3; calcium-binding domain occupies 110–151; it reads DVDECSEPGLSRCHALATCINNKGNYSCVCPAGYRGDGQHCE. Residue asparagine 134 is glycosylated (N-linked (GlcNAc...) asparagine). The tract at residues 152–173 is beta hairpin; the sequence is CSPGSCGPGLDCVPVGDALVCA. The D10C stretch occupies residues 174–293; that stretch reads DPCQEHRILD…CYLAYCTDPT (120 aa). 2 N-linked (GlcNAc...) asparagine glycosylation sites follow: asparagine 234 and asparagine 246. Asparagine 277 carries N-linked (GlcNAc...) asparagine glycosylation. One can recognise an EGF-like 4 domain in the interval 294–325; the sequence is SVLGTCEECSVEEDCKSHDGMWSCQCKQDFNV. Asparagine 324 carries N-linked (GlcNAc...) asparagine glycosylation. The ZP-N stretch occupies residues 335–430; that stretch reads ECRPNDIKVS…KINFECSYPL (96 aa). The region spanning 335-590 is the ZP domain; it reads ECRPNDIKVS…PTCSGTRFRS (256 aa). Residues asparagine 397 and asparagine 448 are each glycosylated (N-linked (GlcNAc...) asparagine). The flexible ZP-N/ZP-C linker; important for secretion and polymerization into filaments stretch occupies residues 431–454; it reads DMKVSLETSLQPIVSSLNISVGGT. Positions 455-465 are internal hydrophobic patch (IHP); that stretch reads GMFTVRMALFQ. The segment at 455–590 is ZP-C; sequence GMFTVRMALF…PTCSGTRFRS (136 aa). Cystine bridges form between cysteine 507/cysteine 567, cysteine 528/cysteine 583, and cysteine 572/cysteine 579. Residue asparagine 514 is glycosylated (N-linked (GlcNAc...) asparagine). Positions 587–590 are essential for cleavage by HPN; the sequence is RFRS. Residues 599–607 are external hydrophobic patch (EHP); regulates polymerization into filaments; that stretch reads VLNLGPITR. Serine 620 is lipidated: GPI-anchor amidated serine. Positions 621–642 are cleaved as a propeptide — removed in mature form; that stretch reads SLGFLKVCLPLLLSATLTLMFQ.

As to quaternary structure, homodimer that then polymerizes into long filaments. The filaments can additionally assemble laterally to form a sheet. The filaments consist of a zigzag-shaped backbone with laterally protruding arms which interact with bacterial adhesin fimH. Two fimH molecules can bind to a single UMOD monomer. Post-translationally, N-glycosylated. Proteolytically cleaved at a conserved C-terminal proteolytic cleavage site to generate the secreted form found in urine. This cleavage is catalyzed by HPN. In terms of tissue distribution, detected in kidney and pancreas.

It localises to the apical cell membrane. The protein resides in the basolateral cell membrane. The protein localises to the cell projection. Its subcellular location is the cilium membrane. It is found in the secreted. Its function is as follows. Functions in biogenesis and organization of the apical membrane of epithelial cells of the thick ascending limb of Henle's loop (TALH), where it promotes formation of complex filamentous gel-like structure that may play a role in the water barrier permeability. May serve as a receptor for binding and endocytosis of cytokines (IL-1, IL-2) and TNF. Facilitates neutrophil migration across renal epithelia. In terms of biological role, in the urine, may contribute to colloid osmotic pressure, retards passage of positively charged electrolytes, and inhibits formation of liquid containing supersaturated salts and subsequent formation of salt crystals. Protects against urinary tract infections by binding to type 1 fimbriated E.coli. Binds to bacterial adhesin fimH which mediates the stable formation of bacterial aggregates, prevents the binding of E.coli to uroplakins UPK1A and UPK1B which act as urothelial receptors for type I fimbriae, and allows for pathogen clearance through micturation. Also promotes aggregation of other bacteria including K.pneumoniae, P.aeruginosa and S.mitis and so may also protect against other uropathogens. The protein is Uromodulin (UMOD) of Canis lupus familiaris (Dog).